The primary structure comprises 1152 residues: Syntaxin-binding protein 5 (1152 aa).

The tract at residues 14–35 (TAGSSSASQQQQQQQHPPGNRE) is disordered. The span at 17 to 28 (SSSASQQQQQQQ) shows a compositional bias: low complexity. WD repeat units lie at residues 62 to 95 (SALAFDPVQKILAVGTQTGALRLFGRPGVECYCQ), 102 to 141 (VIQLQFLINEGALVSALADDTLHLWNLRQKRPAVLHSLKF), 146 to 182 (VTFCHLPFQSKWLYVGTERGNIHIVNVESFTLSGYVI), 201 to 235 (HISDNPMDEGKLLIGFESGTVVLWDLKSKKADYRY), 241 to 273 (IHSVAWHHEGKQFICSHSDGTLTIWNVRSPAKP), 295 to 337 (PILK…KSTA), 345 to 379 (IVDFLTLCETPYPNDFQEPYAVVVLLEKDLVLIDL), 401 to 478 (TCCE…YKLK), 506 to 620 (QIIS…ELVI), and 634 to 696 (TSLA…SGAG). 2 disordered regions span residues 555–596 (VDTP…GLRD) and 675–731 (SNDP…QKVN). Ser693 is subject to Phosphoserine. The segment covering 713-722 (SPTSGSSSPH) has biased composition (low complexity). Residues Ser724 and Ser760 each carry the phosphoserine modification. Thr763 carries the phosphothreonine modification. Ser783 is modified (phosphoserine). Thr785 is subject to Phosphothreonine. Ser786 carries the post-translational modification Phosphoserine. WD repeat units follow at residues 795–852 (ISAL…SGTI), 861–935 (RMAF…QSCA), 940–984 (ITET…LDVY), and 998–1021 (CFANNGQALYLVSPTEIQRLTYSQ). Basic and acidic residues predominate over residues 883 to 893 (NVAEEKDEKEK). A disordered region spans residues 883 to 907 (NVAEEKDEKEKLKKRRPVSVSPSSS). Residues Ser901 and Ser903 each carry the phosphoserine modification. Residue Thr1040 is modified to Phosphothreonine. Ser1059 and Ser1132 each carry phosphoserine. The region spanning 1087-1147 (GIEGVKGAAS…HEMMLKYKDK (61 aa)) is the v-SNARE coiled-coil homology domain.

This sequence belongs to the WD repeat L(2)GL family. In terms of assembly, part of a complex that contains STX1, STXBP5, SNAP25 and SYT1. Interacts with STX1A and STX4A via its v-SNARE homology domain. Part of a complex that contains STXBP5, STX4A and SNAP23. As to expression, detected in heart, spleen, lung, skeletal muscle, liver and kidney (at protein level). Detected in brain, particularly in the olfactory bulb and in hippocampus. Detected in the tenia tecta and in the piriform layer of the brain cortex.

It is found in the cytoplasm. The protein localises to the cell membrane. The protein resides in the membrane. Its function is as follows. Plays a regulatory role in calcium-dependent exocytosis and neurotransmitter release. Inhibits membrane fusion between transport vesicles and the plasma membrane. May modulate the assembly of trans-SNARE complexes between transport vesicles and the plasma membrane. Competes with STXBP1 for STX1 binding. Inhibits translocation of GLUT4 from intracellular vesicles to the plasma membrane. This is Syntaxin-binding protein 5 (Stxbp5) from Mus musculus (Mouse).